The chain runs to 429 residues: 3-phosphoshikimate 1-carboxyvinyltransferase (429 aa).

3-phosphoshikimate contacts are provided by lysine 11, serine 12, and arginine 16. Lysine 11 lines the phosphoenolpyruvate pocket. Glycine 82 and arginine 110 together coordinate phosphoenolpyruvate. 3-phosphoshikimate is bound by residues serine 155, glutamine 157, aspartate 302, and lysine 329. Glutamine 157 contacts phosphoenolpyruvate. Aspartate 302 serves as the catalytic Proton acceptor. Arginine 333 and arginine 385 together coordinate phosphoenolpyruvate.

It belongs to the EPSP synthase family. In terms of assembly, monomer.

It localises to the cytoplasm. The catalysed reaction is 3-phosphoshikimate + phosphoenolpyruvate = 5-O-(1-carboxyvinyl)-3-phosphoshikimate + phosphate. The protein operates within metabolic intermediate biosynthesis; chorismate biosynthesis; chorismate from D-erythrose 4-phosphate and phosphoenolpyruvate: step 6/7. Functionally, catalyzes the transfer of the enolpyruvyl moiety of phosphoenolpyruvate (PEP) to the 5-hydroxyl of shikimate-3-phosphate (S3P) to produce enolpyruvyl shikimate-3-phosphate and inorganic phosphate. The sequence is that of 3-phosphoshikimate 1-carboxyvinyltransferase from Helicobacter pylori (strain HPAG1).